Consider the following 509-residue polypeptide: Zinc finger CCCH-type with G patch domain-containing protein (509 aa).

The C3H1-type zinc-finger motif lies at 155-178; that stretch reads PCNYYLEGECRFDEIRCRYSHGAL. The disordered stretch occupies residues 254-277; it reads EDELTSEDSSSSPHDESSDEIDSD. Residues 310-356 enclose the G-patch domain; sequence TRGIGSKLMEKMGYIHGTGLGSEGRGIVTPVSAQILPQGRSLDACME. The segment at 407–430 is disordered; sequence LGGGESRHQGDQAAKKAKTNDLQQ. Residues 411-420 show a composition bias toward basic and acidic residues; the sequence is ESRHQGDQAA.

It localises to the nucleus. In terms of biological role, transcription repressor. The protein is Zinc finger CCCH-type with G patch domain-containing protein of Drosophila pseudoobscura pseudoobscura (Fruit fly).